The primary structure comprises 85 residues: Large ribosomal subunit protein bL27 (85 aa).

The disordered stretch occupies residues M1 to G22.

Belongs to the bacterial ribosomal protein bL27 family.

The polypeptide is Large ribosomal subunit protein bL27 (Vibrio atlanticus (strain LGP32) (Vibrio splendidus (strain Mel32))).